A 500-amino-acid chain; its full sequence is Small ribosomal subunit protein uS3m (500 aa).

The protein belongs to the universal ribosomal protein uS3 family.

The protein localises to the mitochondrion. In Prototheca wickerhamii, this protein is Small ribosomal subunit protein uS3m (RPS3).